Reading from the N-terminus, the 418-residue chain is Aspartate aminotransferase, cytoplasmic (418 aa).

Residue Ser2 is modified to N-acetylserine. 3 residues coordinate L-aspartate: Gly38, Trp135, and Asn188. At Lys255 the chain carries N6-(pyridoxal phosphate)lysine. Residue Arg387 participates in L-aspartate binding. Ser389 is modified (phosphoserine).

It belongs to the class-I pyridoxal-phosphate-dependent aminotransferase family. In terms of assembly, homodimer. Pyridoxal 5'-phosphate serves as cofactor.

Its subcellular location is the cytoplasm. It localises to the peroxisome. It carries out the reaction L-aspartate + 2-oxoglutarate = oxaloacetate + L-glutamate. In terms of biological role, plays a key role in amino acid metabolism. The protein is Aspartate aminotransferase, cytoplasmic (AAT2) of Saccharomyces cerevisiae (strain ATCC 204508 / S288c) (Baker's yeast).